Reading from the N-terminus, the 150-residue chain is 2-aminobenzenesulfonate 2,3-dioxygenase subunit beta (150 aa).

Belongs to the bacterial ring-hydroxylating dioxygenase beta subunit family. Heterotetramer with a alpha2beta2 structure.

It carries out the reaction 2-aminobenzenesulfonate + NADH + O2 + 2 H(+) = 2,3-dihydroxybenzenesulfonate + NH4(+) + NAD(+). Its activity is regulated as follows. Inhibited by o-phenanthroline. Beta subunit of the oxygenase component of the 2-aminobenzenesulfonate 2,3-dioxygenase system (deaminating) (ABSDOS). Can use 2-aminobenzenesulfonate (ABS), benzenesulfonate (BS), 4-toluenesulfonate (TS), 2-nitrobenzenesulfonate, 3- and 4-aminobenzenesulfonates, 4-chloro- and 4-hydroxybenzenesulfonates and pyridine-3-sulfonate as substrates. No desulfonation of ABS to aminocatechol or aminophenol detected. In Alcaligenes sp, this protein is 2-aminobenzenesulfonate 2,3-dioxygenase subunit beta.